The primary structure comprises 872 residues: HTH-type transcriptional regulator AlkS (872 aa).

The 66-residue stretch at 805 to 870 (LTNTQSTITI…RAVSEARLRG (66 aa)) folds into the HTH luxR-type domain. The H-T-H motif DNA-binding region spans 829-848 (NKEIAERLLITEDTVKWHLK).

It functions in the pathway hydrocarbon metabolism; alkane degradation. This protein activates the expression of AlkB1 in the presence of alkanes. This is HTH-type transcriptional regulator AlkS (alkS) from Alcanivorax borkumensis (strain ATCC 700651 / DSM 11573 / NCIMB 13689 / SK2).